The following is a 202-amino-acid chain: Recombination protein RecR (202 aa).

The segment at 58 to 73 (CANCGNLTDKKLCDIC) adopts a C4-type zinc-finger fold. The 98-residue stretch at 81 to 178 (SVITVVEDSM…KVSRIAMGVP (98 aa)) folds into the Toprim domain.

Belongs to the RecR family.

Its function is as follows. May play a role in DNA repair. It seems to be involved in an RecBC-independent recombinational process of DNA repair. It may act with RecF and RecO. In Finegoldia magna (strain ATCC 29328 / DSM 20472 / WAL 2508) (Peptostreptococcus magnus), this protein is Recombination protein RecR.